Reading from the N-terminus, the 151-residue chain is Small ribosomal subunit protein uS19 (151 aa).

Alanine 2 carries the N-acetylalanine modification.

It belongs to the universal ribosomal protein uS19 family.

Its function is as follows. Negatively regulates lifespan. The polypeptide is Small ribosomal subunit protein uS19 (Caenorhabditis elegans).